The chain runs to 464 residues: Alpha-2A adrenergic receptor (464 aa).

Over M1–T47 the chain is Extracellular. The segment at W13–G34 is disordered. The span at Q19–G29 shows a compositional bias: polar residues. N24 and N28 each carry an N-linked (GlcNAc...) asparagine glycan. The chain crosses the membrane as a helical span at residues V48–F73. Over T74–L84 the chain is Cytoplasmic. The helical transmembrane segment at F85–M110 threads the bilayer. Residues G111–C120 are Extracellular-facing. C120 and C201 are joined by a disulfide. Residues E121–L143 traverse the membrane as a helical segment. Residues D144–R163 are Cytoplasmic-facing. The helical transmembrane segment at I164–E187 threads the bilayer. Topologically, residues K188–Q206 are extracellular. Residues K207–R231 traverse the membrane as a helical segment. Residues I232–F388 lie on the Cytoplasmic side of the membrane. Residues T240 to G378 form a disordered region. The segment covering A251–G268 has biased composition (low complexity). Residues S312 to L329 show a composition bias toward basic and acidic residues. S345 is subject to Phosphoserine. Positions A354–P363 are enriched in gly residues. R367 bears the Omega-N-methylarginine mark. A helical transmembrane segment spans residues V389–V413. Over G414–K423 the chain is Extracellular. The chain crosses the membrane as a helical span at residues F424 to N444. The Cytoplasmic segment spans residues H445–V464. C456 carries the S-palmitoyl cysteine lipid modification.

It belongs to the G-protein coupled receptor 1 family. Adrenergic receptor subfamily. ADRA2A sub-subfamily. In terms of assembly, component of the ADA2A-containing complex (ATAC), composed of KAT14, KAT2A, TADA2L, TADA3L, ZZ3, MBIP, WDR5, YEATS2, CCDC101 and DR1.

Its subcellular location is the cell membrane. Alpha-2 adrenergic receptors mediate the catecholamine-induced inhibition of adenylate cyclase through the action of G proteins. Component of the ATAC complex, a complex with histone acetyltransferase activity on histones H3 and H4. This Cavia porcellus (Guinea pig) protein is Alpha-2A adrenergic receptor.